The following is a 351-amino-acid chain: Spindolin (351 aa).

The N-terminal stretch at 1–20 is a signal peptide; the sequence is MNKFYYICIYINILYVCVSG.

In terms of assembly, homodimer; disulfide-linked.

This protein is a spindle body protein. This Lepidoptera (butterflies and moths) protein is Spindolin.